A 198-amino-acid polypeptide reads, in one-letter code: Small ribosomal subunit protein uS2 (198 aa).

The protein belongs to the universal ribosomal protein uS2 family.

This is Small ribosomal subunit protein uS2 (rps2) from Methanothermobacter thermautotrophicus (strain ATCC 29096 / DSM 1053 / JCM 10044 / NBRC 100330 / Delta H) (Methanobacterium thermoautotrophicum).